Here is a 119-residue protein sequence, read N- to C-terminus: Acidic phospholipase A2 CM-II (119 aa).

Residues Tyr25, Gly27, and Gly29 each contribute to the Ca(2+) site. His45 is an active-site residue. Residue Asp46 participates in Ca(2+) binding. Residue Asp87 is part of the active site.

This sequence belongs to the phospholipase A2 family. Group II subfamily. D49 sub-subfamily. The cofactor is Ca(2+). In terms of processing, contains 6 disulfide bonds. Expressed by the venom gland.

It localises to the secreted. It carries out the reaction a 1,2-diacyl-sn-glycero-3-phosphocholine + H2O = a 1-acyl-sn-glycero-3-phosphocholine + a fatty acid + H(+). In terms of biological role, PLA2 catalyzes the calcium-dependent hydrolysis of the 2-acyl groups in 3-sn-phosphoglycerides. The chain is Acidic phospholipase A2 CM-II from Bitis nasicornis (Rhinoceros adder).